Reading from the N-terminus, the 429-residue chain is Glutamate-1-semialdehyde 2,1-aminomutase 2 (429 aa).

N6-(pyridoxal phosphate)lysine is present on lysine 268.

Belongs to the class-III pyridoxal-phosphate-dependent aminotransferase family. HemL subfamily. Homodimer. Pyridoxal 5'-phosphate serves as cofactor.

Its subcellular location is the cytoplasm. The catalysed reaction is (S)-4-amino-5-oxopentanoate = 5-aminolevulinate. Its pathway is porphyrin-containing compound metabolism; protoporphyrin-IX biosynthesis; 5-aminolevulinate from L-glutamyl-tRNA(Glu): step 2/2. The protein is Glutamate-1-semialdehyde 2,1-aminomutase 2 of Listeria monocytogenes serotype 4a (strain HCC23).